The following is a 360-amino-acid chain: UDP-N-acetylglucosamine--N-acetylmuramyl-(pentapeptide) pyrophosphoryl-undecaprenol N-acetylglucosamine transferase (360 aa).

UDP-N-acetyl-alpha-D-glucosamine contacts are provided by residues 11–13 (TGG), Asn-117, Arg-160, Ser-192, and Gln-294.

Belongs to the glycosyltransferase 28 family. MurG subfamily.

The protein resides in the cell inner membrane. The enzyme catalyses di-trans,octa-cis-undecaprenyl diphospho-N-acetyl-alpha-D-muramoyl-L-alanyl-D-glutamyl-meso-2,6-diaminopimeloyl-D-alanyl-D-alanine + UDP-N-acetyl-alpha-D-glucosamine = di-trans,octa-cis-undecaprenyl diphospho-[N-acetyl-alpha-D-glucosaminyl-(1-&gt;4)]-N-acetyl-alpha-D-muramoyl-L-alanyl-D-glutamyl-meso-2,6-diaminopimeloyl-D-alanyl-D-alanine + UDP + H(+). It functions in the pathway cell wall biogenesis; peptidoglycan biosynthesis. Its function is as follows. Cell wall formation. Catalyzes the transfer of a GlcNAc subunit on undecaprenyl-pyrophosphoryl-MurNAc-pentapeptide (lipid intermediate I) to form undecaprenyl-pyrophosphoryl-MurNAc-(pentapeptide)GlcNAc (lipid intermediate II). This is UDP-N-acetylglucosamine--N-acetylmuramyl-(pentapeptide) pyrophosphoryl-undecaprenol N-acetylglucosamine transferase from Rickettsia felis (strain ATCC VR-1525 / URRWXCal2) (Rickettsia azadi).